The primary structure comprises 393 residues: Pyrimidine monooxygenase RutA (393 aa).

FMN contacts are provided by residues 79-80 (IK), Asn145, Glu154, 170-171 (RY), and Ser220.

The protein belongs to the NtaA/SnaA/DszA monooxygenase family. RutA subfamily.

It carries out the reaction uracil + FMNH2 + NADH + O2 = (Z)-3-ureidoacrylate + FMN + NAD(+) + H2O + H(+). The catalysed reaction is thymine + FMNH2 + NADH + O2 = (Z)-2-methylureidoacrylate + FMN + NAD(+) + H2O + H(+). Functionally, catalyzes the pyrimidine ring opening between N-3 and C-4 by an unusual flavin hydroperoxide-catalyzed mechanism, adding oxygen atoms in the process to yield ureidoacrylate peracid, that immediately reacts with FMN forming ureidoacrylate and FMN-N(5)-oxide. The FMN-N(5)-oxide reacts spontaneously with NADH to produce FMN. Requires the flavin reductase RutF to regenerate FMN in vivo. The polypeptide is Pyrimidine monooxygenase RutA (Escherichia coli O6:H1 (strain CFT073 / ATCC 700928 / UPEC)).